A 423-amino-acid polypeptide reads, in one-letter code: D-tagatose-1,6-bisphosphate aldolase subunit GatZ (423 aa).

This sequence belongs to the GatZ/KbaZ family. GatZ subfamily. In terms of assembly, forms a complex with GatY.

It participates in carbohydrate metabolism; D-tagatose 6-phosphate degradation; D-glyceraldehyde 3-phosphate and glycerone phosphate from D-tagatose 6-phosphate: step 2/2. Component of the tagatose-1,6-bisphosphate aldolase GatYZ that is required for full activity and stability of the Y subunit. Could have a chaperone-like function for the proper and stable folding of GatY. When expressed alone, GatZ does not show any aldolase activity. Is involved in the catabolism of galactitol. This is D-tagatose-1,6-bisphosphate aldolase subunit GatZ from Salmonella enteritidis PT4 (strain P125109).